A 639-amino-acid polypeptide reads, in one-letter code: 1-deoxy-D-xylulose-5-phosphate synthase (639 aa).

Residues histidine 79 and 120–122 (GHS) each bind thiamine diphosphate. Aspartate 151 is a binding site for Mg(2+). Thiamine diphosphate is bound by residues 152–153 (GS), asparagine 180, tyrosine 289, and glutamate 371. Asparagine 180 serves as a coordination point for Mg(2+).

The protein belongs to the transketolase family. DXPS subfamily. Homodimer. Mg(2+) is required as a cofactor. It depends on thiamine diphosphate as a cofactor.

The catalysed reaction is D-glyceraldehyde 3-phosphate + pyruvate + H(+) = 1-deoxy-D-xylulose 5-phosphate + CO2. It participates in metabolic intermediate biosynthesis; 1-deoxy-D-xylulose 5-phosphate biosynthesis; 1-deoxy-D-xylulose 5-phosphate from D-glyceraldehyde 3-phosphate and pyruvate: step 1/1. In terms of biological role, catalyzes the acyloin condensation reaction between C atoms 2 and 3 of pyruvate and glyceraldehyde 3-phosphate to yield 1-deoxy-D-xylulose-5-phosphate (DXP). This is 1-deoxy-D-xylulose-5-phosphate synthase from Agrobacterium fabrum (strain C58 / ATCC 33970) (Agrobacterium tumefaciens (strain C58)).